Reading from the N-terminus, the 166-residue chain is Endoribonuclease YbeY (166 aa).

The Zn(2+) site is built by His-126, His-130, and His-136.

Belongs to the endoribonuclease YbeY family. Requires Zn(2+) as cofactor.

It localises to the cytoplasm. In terms of biological role, single strand-specific metallo-endoribonuclease involved in late-stage 70S ribosome quality control and in maturation of the 3' terminus of the 16S rRNA. The sequence is that of Endoribonuclease YbeY from Laribacter hongkongensis (strain HLHK9).